The sequence spans 72 residues: Translation initiation factor IF-1 (72 aa).

One can recognise an S1-like domain in the interval 1–72; that stretch reads MAKEDVIEIE…TRGRITYRFK (72 aa).

It belongs to the IF-1 family. Component of the 30S ribosomal translation pre-initiation complex which assembles on the 30S ribosome in the order IF-2 and IF-3, IF-1 and N-formylmethionyl-tRNA(fMet); mRNA recruitment can occur at any time during PIC assembly.

The protein resides in the cytoplasm. One of the essential components for the initiation of protein synthesis. Stabilizes the binding of IF-2 and IF-3 on the 30S subunit to which N-formylmethionyl-tRNA(fMet) subsequently binds. Helps modulate mRNA selection, yielding the 30S pre-initiation complex (PIC). Upon addition of the 50S ribosomal subunit IF-1, IF-2 and IF-3 are released leaving the mature 70S translation initiation complex. The chain is Translation initiation factor IF-1 from Streptococcus suis (strain 05ZYH33).